Consider the following 250-residue polypeptide: 3-deoxy-manno-octulosonate cytidylyltransferase (250 aa).

The protein belongs to the KdsB family.

It localises to the cytoplasm. The enzyme catalyses 3-deoxy-alpha-D-manno-oct-2-ulosonate + CTP = CMP-3-deoxy-beta-D-manno-octulosonate + diphosphate. Its pathway is nucleotide-sugar biosynthesis; CMP-3-deoxy-D-manno-octulosonate biosynthesis; CMP-3-deoxy-D-manno-octulosonate from 3-deoxy-D-manno-octulosonate and CTP: step 1/1. The protein operates within bacterial outer membrane biogenesis; lipopolysaccharide biosynthesis. Its function is as follows. Activates KDO (a required 8-carbon sugar) for incorporation into bacterial lipopolysaccharide in Gram-negative bacteria. In Azorhizobium caulinodans (strain ATCC 43989 / DSM 5975 / JCM 20966 / LMG 6465 / NBRC 14845 / NCIMB 13405 / ORS 571), this protein is 3-deoxy-manno-octulosonate cytidylyltransferase.